The sequence spans 408 residues: Type II methyltransferase M.VspI (408 aa).

This sequence belongs to the N(4)/N(6)-methyltransferase family.

The enzyme catalyses a 2'-deoxyadenosine in DNA + S-adenosyl-L-methionine = an N(6)-methyl-2'-deoxyadenosine in DNA + S-adenosyl-L-homocysteine + H(+). Functionally, a gamma subtype methylase, recognizes the double-stranded sequence 5'-ATTAAT-3', methylates A-5 on both strands, and protects the DNA from cleavage by the VspI endonuclease. This is Type II methyltransferase M.VspI from Vibrio sp. (strain 343).